The primary structure comprises 198 residues: Recombination protein RecR (198 aa).

A C4-type zinc finger spans residues 57–72 (CEKCNTFTEAQICEVC). The 96-residue stretch at 80 to 175 (TLLCVVETPA…AVTRLARGVP (96 aa)) folds into the Toprim domain.

This sequence belongs to the RecR family.

Functionally, may play a role in DNA repair. It seems to be involved in an RecBC-independent recombinational process of DNA repair. It may act with RecF and RecO. The protein is Recombination protein RecR of Burkholderia ambifaria (strain MC40-6).